Reading from the N-terminus, the 317-residue chain is Putative carboxypeptidase RP402 (317 aa).

Ser-125 serves as the catalytic Nucleophile. Catalysis depends on charge relay system residues Glu-225 and His-288.

Belongs to the peptidase S66 family.

The sequence is that of Putative carboxypeptidase RP402 from Rickettsia prowazekii (strain Madrid E).